A 432-amino-acid polypeptide reads, in one-letter code: Glycerophosphocholine acyltransferase 1 (432 aa).

Residues 1-110 (MYKLDNNDID…DSIFFKNSSR (110 aa)) lie on the Cytoplasmic side of the membrane. At S78 the chain carries Phosphoserine. A helical membrane pass occupies residues 111–131 (LEKAFYPFTLFNIFFIGFLMG). R132 is a topological domain (lumenal). The chain crosses the membrane as a helical span at residues 133–153 (FPEWFHVYYTILFFVLMPIRF). The Cytoplasmic segment spans residues 154–162 (YTYYKTKNH). A helical transmembrane segment spans residues 163 to 183 (YFLADFCYFVNMLCLLFIWIF). Residues 184 to 187 (PYSY) lie on the Lumenal side of the membrane. Residues 188–208 (SLFQSCFAFTFGTLCFAVITW) form a helical membrane-spanning segment. Over 209–221 (RNSLVIHSIDKTT) the chain is Cytoplasmic. A helical transmembrane segment spans residues 222–242 (SCFIHIIPPCVMYVIYHGLPL). At 243–263 (EYKIERFPGAIIQSELDIKKN) the chain is on the lumenal side. Residues 264 to 284 (ILWTSLYYLVWQSLYHYFITL) form a helical membrane-spanning segment. Topologically, residues 285 to 318 (KKSSKIKSGERMTSFEYLTTHQFKNFWAVKLRSP) are cytoplasmic. The chain crosses the membrane as a helical span at residues 319 to 339 (WPMIIYTLSQYFYQLFTMLLC). The Lumenal portion of the chain corresponds to 340–346 (GIWIRYK). Residues 347–369 (LAAALFLTIVFLWASHNGATYYI) traverse the membrane as a helical segment. Residues 370–432 (DHYGKNFEKE…DSSSVSSKSD (63 aa)) lie on the Cytoplasmic side of the membrane. The segment at 413–432 (LNVNRDEDFDDSSSVSSKSD) is disordered.

The protein belongs to the GPC1 family.

The protein resides in the membrane. The catalysed reaction is sn-glycerol 3-phosphocholine + an acyl-CoA = a 1-acyl-sn-glycero-3-phosphocholine + CoA. The enzyme catalyses sn-glycero-3-phosphoethanolamine + an acyl-CoA = a monoacyl-sn-glycero-3-phosphoethanolamine + CoA. It catalyses the reaction sn-glycero-3-phosphoethanolamine + (9Z)-octadecenoyl-CoA = (9Z-octadecenoyl)-sn-glycero-3-phosphoethanolamine + CoA. It carries out the reaction sn-glycerol 3-phosphocholine + hexadecanoyl-CoA = hexadecanoyl-sn-glycero-3-phosphocholine + CoA. The catalysed reaction is (9Z,12Z)-octadecadienoyl-CoA + sn-glycerol 3-phosphocholine = (9Z,12Z-octadecadienoyl)-sn-glycero-3-phosphocholine + CoA. The enzyme catalyses (12R)-hydroxy-(9Z)-octadecenoyl-CoA + sn-glycerol 3-phosphocholine = (12R-hydroxy-9Z-octadecenoyl)-sn-glycero-3-phosphocholine + CoA. It catalyses the reaction (9Z,12Z,15Z)-octadecatrienoyl-CoA + sn-glycerol 3-phosphocholine = (9Z,12Z,15Z-octadecatrienoyl)-sn-glycero-3-phosphocholine + CoA. It carries out the reaction sn-glycerol 3-phosphocholine + (9Z)-octadecenoyl-CoA = (9Z-octadecenoyl)-sn-glycero-3-phosphocholine + CoA. The catalysed reaction is 1-(9Z-octadecenoyl)-sn-glycero-3-phosphoethanolamine + sn-glycerol 3-phosphocholine = (9Z-octadecenoyl)-sn-glycero-3-phosphocholine + sn-glycero-3-phosphoethanolamine. Its activity is regulated as follows. The GPCAT activity is sensitive to N-ethylmaleimide, phenanthroline, and divalent cations including Ca(2+), Mg(2+), Mn(2+) and Zn(2+). The activity is also inhibited by glycerol-3-phosphate (G3P). Functionally, glycerophosphocholine acyltransferase (GPCAT) that utilizes acyl-CoA to acylate glycero-3-phosphocholine (GPC), forming lysophosphatidylcholine (LPC). Shows broad acyl specificities with a preference for 16:0-CoA, polyunsaturated acyl-CoA, and the hydroxylated ricinoleoyl-CoA. Also catalyzes the acylation of glycero-3-phosphoethanolamine (GPE) with acyl-CoA. In addition to acyl-CoA, GPCAT efficiently utilizes LPC and lysophosphatidylethanolamine (LPE) as acyl donors in the acylation of GPC. Contributes to the maintenance of phosphatidylcholine (PC) homeostasis and might also have specific functions in acyl editing of PC, such as transferring acyl groups modified at the sn-2 position of PC to the sn-1. Involved in postsynthetic PC remodeling that produces more saturated PC species. The chain is Glycerophosphocholine acyltransferase 1 from Saccharomyces cerevisiae (strain ATCC 204508 / S288c) (Baker's yeast).